We begin with the raw amino-acid sequence, 327 residues long: BarH-like 1 homeobox protein (327 aa).

Disordered regions lie at residues Met1 to Arg90, Ala112 to Ala184, and Gly305 to Arg327. Positions Arg33–Pro54 are enriched in low complexity. Residues Gln79–Arg90 show a composition bias toward polar residues. 2 stretches are compositionally biased toward basic and acidic residues: residues Ala133–Lys143 and Ser152–Ser166. The homeobox DNA-binding region spans Pro178–Thr237. Low complexity predominate over residues Leu316–Arg327.

Belongs to the BAR homeobox family.

It localises to the nucleus. The sequence is that of BarH-like 1 homeobox protein (BARHL1) from Homo sapiens (Human).